Reading from the N-terminus, the 178-residue chain is Small ribosomal subunit protein uS4 (178 aa).

The 63-residue stretch at 104 to 166 (RRLQTMVYKK…PNSPMASENH (63 aa)) folds into the S4 RNA-binding domain. A disordered region spans residues 157–178 (PNSPMASENHPERTAAVSEENQ).

It belongs to the universal ribosomal protein uS4 family. In terms of assembly, part of the 30S ribosomal subunit. Contacts protein S5. The interaction surface between S4 and S5 is involved in control of translational fidelity.

In terms of biological role, one of the primary rRNA binding proteins, it binds directly to 16S rRNA where it nucleates assembly of the body of the 30S subunit. With S5 and S12 plays an important role in translational accuracy. In Methanococcus maripaludis (strain C7 / ATCC BAA-1331), this protein is Small ribosomal subunit protein uS4.